A 683-amino-acid chain; its full sequence is Phenoloxidase 3 (683 aa).

Positions 1 to 48 are excised as a propeptide; that stretch reads MADKKNLLLLFDHPTEPVFMDKGGNGTVFDVPASYVTDRYNKMCKKVQ. N25 carries an N-linked (GlcNAc...) asparagine glycan. Residues H209, H213, and H239 each coordinate Cu cation. E351 serves as the catalytic Proton acceptor. N358 is a glycosylation site (N-linked (GlcNAc...) asparagine). The Cu cation site is built by H366, H370, and H406. N492 and N514 each carry an N-linked (GlcNAc...) asparagine glycan. Cystine bridges form between C574-C617 and C576-C624.

The protein belongs to the tyrosinase family. Cu(2+) serves as cofactor. Post-translationally, upon activation, a trypsin type protease cleaves prophenol oxidase to yield the active enzyme.

Its subcellular location is the secreted. The catalysed reaction is 2 L-dopa + O2 = 2 L-dopaquinone + 2 H2O. It carries out the reaction L-tyrosine + O2 = L-dopaquinone + H2O. Its function is as follows. This is a copper-containing oxidase that functions in the formation of pigments such as melanins and other polyphenolic compounds. Catalyzes the rate-limiting conversions of tyrosine to DOPA, DOPA to DOPA-quinone and possibly 5,6 dihydroxyindole to indole-5'6 quinone. The protein is Phenoloxidase 3 (PPO3) of Drosophila erecta (Fruit fly).